Consider the following 427-residue polypeptide: Endothelin-1 receptor (427 aa).

An N-terminal signal peptide occupies residues 1–20 (METLCLRASFWLALVGCVIS). At 21–80 (DNPERYSTNLSNHVDDFTTFRGTELSFLVTTHQPTNLVLPSNGSMHNYCPQQTKITSAFK) the chain is on the extracellular side. Asparagine 29 and asparagine 62 each carry an N-linked (GlcNAc...) asparagine glycan. A helical membrane pass occupies residues 81 to 102 (YINTVISCTIFIVGMVGNATLL). At 103 to 112 (RIIYQNKCMR) the chain is on the cytoplasmic side. Residues 113–132 (NGPNALIASLALGDLIYVVI) traverse the membrane as a helical segment. The Extracellular segment spans residues 133 to 159 (DLPINVFKLLAGRWPFDHNDFGVFLCK). A disulfide bridge connects residues cysteine 158 and cysteine 239. The helical transmembrane segment at 160–181 (LFPFLQKSSVGITVLNLCALSV) threads the bilayer. Over 182 to 205 (DRYRAVASWSRVQGIGIPLVTAIE) the chain is Cytoplasmic. Residues 206–229 (IVSIWILSFILAIPEAIGFVMVPF) form a helical membrane-spanning segment. At 230 to 256 (EYRGEQHKTCMLNATSKFMEFYQDVKD) the chain is on the extracellular side. Residues 257–278 (WWLFGFYFCMPLVCTAIFYTLM) traverse the membrane as a helical segment. Residues 279-306 (TCEMLNRRNGSLRIALSEHLKQRREVAK) lie on the Cytoplasmic side of the membrane. The helical transmembrane segment at 307–328 (TVFCLVVIFALCWFPLHLSRIL) threads the bilayer. Over 329–347 (KKTVYNEMDKNRCELLSFL) the chain is Extracellular. A helical membrane pass occupies residues 348 to 372 (LLMDYIGINLATMNSCINPIALYFV). Residues 373–427 (SKKFKNCFQSCLCCCCYQSKSLMTSVPMNGTSIQWKNHDQNNHNTDRSSHKDSMN) are Cytoplasmic-facing. A disordered region spans residues 406–427 (QWKNHDQNNHNTDRSSHKDSMN). Residues 408–427 (KNHDQNNHNTDRSSHKDSMN) show a composition bias toward basic and acidic residues. Serine 425 carries the phosphoserine modification.

It belongs to the G-protein coupled receptor 1 family. Endothelin receptor subfamily. EDNRA sub-subfamily. As to quaternary structure, interacts with HDAC7 and KAT5. As to expression, isoform 1, isoform 3 and isoform 4 are expressed in a variety of tissues, with highest levels in the aorta and cerebellum, followed by lung, atrium and cerebral cortex, lower levels in the placenta, kidney, adrenal gland, duodenum, colon, ventricle and liver but no expression in umbilical vein endothelial cells. Within the placenta, isoform 1, isoform 2, isoform 3 and isoform 4 are expressed in the villi and stem villi vessels.

The protein localises to the cell membrane. Receptor for endothelin-1. Mediates its action by association with G proteins that activate a phosphatidylinositol-calcium second messenger system. The rank order of binding affinities for ET-A is: ET1 &gt; ET2 &gt;&gt; ET3. This chain is Endothelin-1 receptor, found in Homo sapiens (Human).